We begin with the raw amino-acid sequence, 335 residues long: Biotin synthase (335 aa).

A Radical SAM core domain is found at 46 to 274; the sequence is YDIQLASLFS…KSKIRLSAGR (229 aa). [4Fe-4S] cluster is bound by residues Cys-61, Cys-65, and Cys-68. Cys-105, Cys-137, Cys-197, and Arg-269 together coordinate [2Fe-2S] cluster.

It belongs to the radical SAM superfamily. Biotin synthase family. Homodimer. Requires [4Fe-4S] cluster as cofactor. [2Fe-2S] cluster is required as a cofactor.

The catalysed reaction is (4R,5S)-dethiobiotin + (sulfur carrier)-SH + 2 reduced [2Fe-2S]-[ferredoxin] + 2 S-adenosyl-L-methionine = (sulfur carrier)-H + biotin + 2 5'-deoxyadenosine + 2 L-methionine + 2 oxidized [2Fe-2S]-[ferredoxin]. It functions in the pathway cofactor biosynthesis; biotin biosynthesis; biotin from 7,8-diaminononanoate: step 2/2. Its function is as follows. Catalyzes the conversion of dethiobiotin (DTB) to biotin by the insertion of a sulfur atom into dethiobiotin via a radical-based mechanism. The chain is Biotin synthase from Prochlorococcus marinus (strain MIT 9215).